We begin with the raw amino-acid sequence, 126 residues long: Large ribosomal subunit protein bL12 (126 aa).

It belongs to the bacterial ribosomal protein bL12 family. Homodimer. Part of the ribosomal stalk of the 50S ribosomal subunit. Forms a multimeric L10(L12)X complex, where L10 forms an elongated spine to which 2 to 4 L12 dimers bind in a sequential fashion. Binds GTP-bound translation factors.

In terms of biological role, forms part of the ribosomal stalk which helps the ribosome interact with GTP-bound translation factors. Is thus essential for accurate translation. The chain is Large ribosomal subunit protein bL12 from Elusimicrobium minutum (strain Pei191).